A 344-amino-acid chain; its full sequence is S-adenosylmethionine:tRNA ribosyltransferase-isomerase (344 aa).

The protein belongs to the QueA family. In terms of assembly, monomer.

The protein resides in the cytoplasm. It catalyses the reaction 7-aminomethyl-7-carbaguanosine(34) in tRNA + S-adenosyl-L-methionine = epoxyqueuosine(34) in tRNA + adenine + L-methionine + 2 H(+). It functions in the pathway tRNA modification; tRNA-queuosine biosynthesis. Transfers and isomerizes the ribose moiety from AdoMet to the 7-aminomethyl group of 7-deazaguanine (preQ1-tRNA) to give epoxyqueuosine (oQ-tRNA). This Acinetobacter baylyi (strain ATCC 33305 / BD413 / ADP1) protein is S-adenosylmethionine:tRNA ribosyltransferase-isomerase.